The following is a 517-amino-acid chain: ATP synthase subunit alpha (517 aa).

Gly174–Thr181 is a binding site for ATP.

The protein belongs to the ATPase alpha/beta chains family. In terms of assembly, F-type ATPases have 2 components, CF(1) - the catalytic core - and CF(0) - the membrane proton channel. CF(1) has five subunits: alpha(3), beta(3), gamma(1), delta(1), epsilon(1). CF(0) has three main subunits: a(1), b(2) and c(9-12). The alpha and beta chains form an alternating ring which encloses part of the gamma chain. CF(1) is attached to CF(0) by a central stalk formed by the gamma and epsilon chains, while a peripheral stalk is formed by the delta and b chains.

Its subcellular location is the cell inner membrane. It carries out the reaction ATP + H2O + 4 H(+)(in) = ADP + phosphate + 5 H(+)(out). Functionally, produces ATP from ADP in the presence of a proton gradient across the membrane. The alpha chain is a regulatory subunit. The protein is ATP synthase subunit alpha of Delftia acidovorans (strain DSM 14801 / SPH-1).